Reading from the N-terminus, the 202-residue chain is Dephospho-CoA kinase (202 aa).

A DPCK domain is found at 5–202; it reads VIGLTGGIGS…KKYLTLTKMV (198 aa). Residue 13–18 coordinates ATP; it reads GSGKTT.

Belongs to the CoaE family.

The protein localises to the cytoplasm. The catalysed reaction is 3'-dephospho-CoA + ATP = ADP + CoA + H(+). Its pathway is cofactor biosynthesis; coenzyme A biosynthesis; CoA from (R)-pantothenate: step 5/5. In terms of biological role, catalyzes the phosphorylation of the 3'-hydroxyl group of dephosphocoenzyme A to form coenzyme A. The polypeptide is Dephospho-CoA kinase (Colwellia psychrerythraea (strain 34H / ATCC BAA-681) (Vibrio psychroerythus)).